We begin with the raw amino-acid sequence, 875 residues long: Serine/threonine-protein kinase D2 (875 aa).

Over residues 1-12 (MAAAPSHPAGLP) the composition is skewed to low complexity. The interval 1 to 35 (MAAAPSHPAGLPGSPGPGSPPPPGGLDLQSPPPLL) is disordered. Over residues 14–35 (SPGPGSPPPPGGLDLQSPPPLL) the composition is skewed to pro residues. A Phosphoserine modification is found at serine 30. A Phosphotyrosine modification is found at tyrosine 87. Residues 138 to 188 (PHALTVHSYRAPAFCDHCGEMLFGLVRQGLKCDGCGLNYHKRCAFSIPNNC) form a Phorbol-ester/DAG-type 1 zinc finger. Phosphoserine is present on residues serine 197, serine 198, serine 200, serine 203, serine 206, serine 211, serine 212, and serine 214. Positions 224-247 (RSTTDLLPRRPPSSSSSSSSSSFY) are disordered. Residues 236–245 (SSSSSSSSSS) show a composition bias toward low complexity. Serine 244 carries the phosphoserine; by CSNK1D and CSNK1E modification. The residue at position 245 (serine 245) is a Phosphoserine. A Phorbol-ester/DAG-type 2 zinc finger spans residues 265-315 (PHTFLIHSYTRPTVCQACKKLLKGLFRQGLQCKDCKFNCHKRCATRVPNDC). The tract at residues 332–374 (DYSEADKSSISDELEDSGVIPGSHSESALHASEEEEGEGHKAQ) is disordered. One can recognise a PH domain in the interval 398–510 (TTLREGWVVH…WETAIRQALM (113 aa)). Tyrosine 408 is modified (phosphotyrosine). Tyrosine 439 is modified (phosphotyrosine; by ABL1). Phosphoserine is present on serine 519. The Protein kinase domain maps to 552–808 (IFPDEVLGSG…VDKSLSHPWL (257 aa)). ATP contacts are provided by residues 558–566 (LGSGQFGVV) and lysine 581. The active-site Proton acceptor is the aspartate 675. Phosphoserine; by PKC is present on serine 707. Residue serine 711 is modified to Phosphoserine; by autocatalysis. Tyrosine 718 bears the Phosphotyrosine; by ABL1 mark. Positions 725-727 (LNQ) match the Important for ABL1-mediated Tyr-718 phosphorylation motif. Serine 873 bears the Phosphoserine; by autocatalysis mark.

It belongs to the protein kinase superfamily. CAMK Ser/Thr protein kinase family. PKD subfamily. As to quaternary structure, interacts (via C-terminus) with LCK. Interacts (via N-terminus and zing-finger domain 1 and 2) with PRKCD in response to oxidative stress; the interaction is independent of PRKD2 tyrosine phosphorylation. Mg(2+) is required as a cofactor. In terms of processing, phosphorylation of Ser-873 correlates with the activation status of the kinase. Ser-707 is probably phosphorylated by PKC. Phosphorylation at Ser-244 by CSNK1D and CSNK1E promotes nuclear localization and substrate targeting. Phosphorylation at Ser-244, Ser-707 and Ser-711 is required for nuclear localization. Phosphorylated at Tyr-438 by ABL1 in response to oxidative stress. Phosphorylated at Tyr-718 by ABL1 specifically in response to oxidative stress; requires prior phosphorylation at Ser-707 or/and Ser-711.

The protein localises to the cytoplasm. Its subcellular location is the cell membrane. It localises to the golgi apparatus. The protein resides in the trans-Golgi network. The enzyme catalyses L-seryl-[protein] + ATP = O-phospho-L-seryl-[protein] + ADP + H(+). It carries out the reaction L-threonyl-[protein] + ATP = O-phospho-L-threonyl-[protein] + ADP + H(+). With respect to regulation, activated by DAG and phorbol esters. Phorbol-ester/DAG-type domains bind DAG, mediating translocation to membranes. Autophosphorylation of Ser-711 and phosphorylation of Ser-707 by PKC relieves auto-inhibition by the PH domain. Catalytic activity is further increased by phosphorylation at Tyr-718 in response to oxidative stress. Its function is as follows. Serine/threonine-protein kinase that converts transient diacylglycerol (DAG) signals into prolonged physiological effects downstream of PKC, and is involved in the regulation of cell proliferation via MAPK1/3 (ERK1/2) signaling, oxidative stress-induced NF-kappa-B activation, inhibition of HDAC7 transcriptional repression, signaling downstream of T-cell antigen receptor (TCR) and cytokine production, and plays a role in Golgi membrane trafficking, angiogenesis, secretory granule release and cell adhesion. May potentiate mitogenesis induced by the neuropeptide bombesin by mediating an increase in the duration of MAPK1/3 (ERK1/2) signaling, which leads to accumulation of immediate-early gene products including FOS that stimulate cell cycle progression. In response to oxidative stress, is phosphorylated at Tyr-438 and Tyr-718 by ABL1, which leads to the activation of PRKD2 without increasing its catalytic activity, and mediates activation of NF-kappa-B. In response to the activation of the gastrin receptor CCKBR, is phosphorylated at Ser-244 by CSNK1D and CSNK1E, translocates to the nucleus, phosphorylates HDAC7, leading to nuclear export of HDAC7 and inhibition of HDAC7 transcriptional repression of NR4A1/NUR77. Upon TCR stimulation, is activated independently of ZAP70, translocates from the cytoplasm to the nucleus and is required for interleukin-2 (IL2) promoter up-regulation. During adaptive immune responses, is required in peripheral T-lymphocytes for the production of the effector cytokines IL2 and IFNG after TCR engagement and for optimal induction of antibody responses to antigens. In epithelial cells stimulated with lysophosphatidic acid (LPA), is activated through a PKC-dependent pathway and mediates LPA-stimulated interleukin-8 (IL8) secretion via a NF-kappa-B-dependent pathway. During TCR-induced T-cell activation, interacts with and is activated by the tyrosine kinase LCK, which results in the activation of the NFAT transcription factors. In the trans-Golgi network (TGN), regulates the fission of transport vesicles that are on their way to the plasma membrane and in polarized cells is involved in the transport of proteins from the TGN to the basolateral membrane. Plays an important role in endothelial cell proliferation and migration prior to angiogenesis, partly through modulation of the expression of KDR/VEGFR2 and FGFR1, two key growth factor receptors involved in angiogenesis. In secretory pathway, is required for the release of chromogranin-A (CHGA)-containing secretory granules from the TGN. Downstream of PRKCA, plays important roles in angiotensin-2-induced monocyte adhesion to endothelial cells. This chain is Serine/threonine-protein kinase D2 (Prkd2), found in Mus musculus (Mouse).